Reading from the N-terminus, the 605-residue chain is 9-cis-epoxycarotenoid dioxygenase NCED1, chloroplastic (605 aa).

Residues 1–16 (MATTTSHATNTWIKTK) constitute a chloroplast transit peptide. Positions 55 to 89 (ILHFPKQSSNYQTPKNNTISHPKQENNNSSSSSTS) are disordered. The span at 60 to 75 (KQSSNYQTPKNNTISH) shows a compositional bias: polar residues. Positions 80–89 (NNNSSSSSTS) are enriched in low complexity. 4 residues coordinate Fe cation: histidine 302, histidine 351, histidine 416, and histidine 592.

It belongs to the carotenoid oxygenase family. The cofactor is Fe(2+). As to expression, expressed in developing and ripening fruits. Highly expressed in pulp. Observed in unpollinated ovaries (e.g. ovules, placenta and pericarp). Expressed in flowers.

The protein resides in the plastid. It is found in the chloroplast stroma. The enzyme catalyses a 9-cis-epoxycarotenoid + O2 = a 12'-apo-carotenal + 2-cis,4-trans-xanthoxin. It carries out the reaction 9-cis-violaxanthin + O2 = (3S,5R,6S)-5,6-epoxy-3-hydroxy-5,6-dihydro-12'-apo-beta-caroten-12'-al + 2-cis,4-trans-xanthoxin. The catalysed reaction is 9'-cis-neoxanthin + O2 = (3S,5R,6R)-3,5-dihydroxy-6,7-didehydro-5,6-dihydro-12'-apo-beta-caroten-12'-al + 2-cis,4-trans-xanthoxin. It participates in plant hormone biosynthesis; abscisate biosynthesis. Its function is as follows. Has a 11,12(11',12') 9-cis epoxycarotenoid cleavage activity. Catalyzes the first step of abscisic-acid (ABA) biosynthesis from carotenoids. Required for ABA accumulation upon drought. Required for ABA-mediated regulation of anther/pollen development, including metabolism, cell wall modification and transcription level. Positive regulator of fruit ripening involved in the biosynthesis of abscisic acid (ABA); initiates ABA biosynthesis at the onset of fruit ripening. Modulates the degree of pigmentation and carotenoid composition as well as pectin catabolism during ripening and may regulate the ethylene production and action in climacteric tomato fruit. The protein is 9-cis-epoxycarotenoid dioxygenase NCED1, chloroplastic of Solanum lycopersicum (Tomato).